Here is a 97-residue protein sequence, read N- to C-terminus: Secreted LysM effector Mg1LysM (97 aa).

The first 18 residues, 1–18, serve as a signal peptide directing secretion; sequence MQFTALVAALLSVAAVQA. In terms of domain architecture, LysM spans 37-84; the sequence is QQYVARSGDTLTKIAQEIYHDVVGVCDIARANNLADPNRIDAGTPYTI. Chitin-binding residues include G44, T48, N74, and I76.

This sequence belongs to the secreted LysM effector family. Forms homodimers in a chitin-independent manner through interactions at the N-termini of Mg1LysM monomers. Homodimers are further polymerized in a chitin-dependent manner.

The protein resides in the secreted. It is found in the cell wall. Functionally, secreted effector that enables the plant pathogenic fungus to manipulate host defenses for successful infection. Binds chitin but not cellulose or xylan. Chitin-induced polymerization of homodimers forms a contiguous Mg1LysM highly oligomeric super-complexe that is anchored to the chitin in the fungal cell wall to prevent hydrolysis by host chitinases. This is Secreted LysM effector Mg1LysM from Zymoseptoria tritici (strain ST99CH_3D7).